The sequence spans 365 residues: Oligosaccharides import ATP-binding protein MsmX (365 aa).

An ABC transporter domain is found at L4 to I235. G37–S44 lines the ATP pocket.

It belongs to the ABC transporter superfamily. In terms of assembly, the complex involved in maltodextrin import is composed of two ATP-binding proteins (MsmX), two transmembrane proteins (MdxF and MdxG) and a solute-binding protein (MdxE). The complex involved in arabinooligosaccharides uptake is composed of two ATP-binding proteins (MsmX), two transmembrane proteins (AraP and AraQ) and a solute-binding protein (AraN). The complex involved in galactooligosaccharides uptake is composed of two ATP-binding proteins (MsmX), two transmembrane proteins (GanP and GanQ) and a solute-binding protein (GanS). The complex involved in melibiose, raffinose and stachyose import is composed of two ATP-binding proteins (MsmX), two transmembrane proteins (MelC and MelD) and a solute-binding protein (MelE). The complex involved in polygalacturonan and rhamnogalacturonan type I uptake is probably composed of two ATP-binding proteins (MsmX), two transmembrane proteins (YtcP and YteP) and a solute-binding protein (YtcQ).

The protein resides in the cell membrane. Functionally, required to energize different ABC-type saccharide transporters. Part of the MdxEFG-MsmX ABC transporter complex involved in maltodextrin import, of the AraNPQ-MsmX complex involved in arabinooligosaccharides import, of the GanPQS-MsmX complex involved in galactooligosaccharides import, and of the MelEDC-MsmX complex involved in melibiose, raffinose and stachyose import. Is probably also part of the ABC transporter complex YtcQP-YteP-MsmX involved in polygalacturonan and rhamnogalacturonan type I import during pectin degradation. Responsible for energy coupling to the transport system. In Bacillus subtilis (strain 168), this protein is Oligosaccharides import ATP-binding protein MsmX (msmX).